Consider the following 598-residue polypeptide: Chromodomain Y-like protein (598 aa).

A disordered region spans residues 1–76 (MTFQASHRSA…VDKRKNKKGK (76 aa)). Polar residues predominate over residues 44–56 (PSISVSSEQSGAQ). In terms of domain architecture, Chromo spans 61–121 (LQVERIVDKR…RHTEKQKEST (61 aa)). An interaction with EZH2 region spans residues 61-309 (LQVERIVDKR…NIQTSVTGVT (249 aa)). The span at 65–76 (RIVDKRKNKKGK) shows a compositional bias: basic and acidic residues. Ser88 carries the post-translational modification Phosphoserine. The segment covering 112-121 (RHTEKQKEST) has biased composition (basic and acidic residues). A disordered region spans residues 112-149 (RHTEKQKESTLTRTNRTSPNNARKQISRSTNSNFSKTS). Residues 122 to 149 (LTRTNRTSPNNARKQISRSTNSNFSKTS) are compositionally biased toward polar residues. Residue Lys135 is modified to N6,N6,N6-trimethyllysine; by EHMT2; alternate. Residue Lys135 is modified to N6,N6-dimethyllysine; by EHMT2; alternate. Lys135 is subject to N6-methyllysine; by EHMT2; alternate. Ser170, Ser201, and Ser216 each carry phosphoserine. A disordered region spans residues 204-226 (KSRTAVDGFQSESPEKLDPVEQG). The acetyl-CoA-binding domain stretch occupies residues 362-594 (SENNSLNPEV…DSMLKYLQRK (233 aa)).

Forms multimers and multimerization is required for stable binding to chromatin. Interacts with HDAC1 and HDAC2 via its C-terminal acetyl-CoA-binding domain. Interacts with EZH2, EED, SUZ12, REST, EHMT1 and EHMT2. Part of a complex containing at least CDYL, REST, WIZ, SETB1, EHMT1 and EHMT2. Part of a complex containing at least CDYL, MIER1, MIER2, HDAC1 and HDAC2. Interacts with CHAF1A and CHAF1B; bridging the CAF-1 complex to the MCM2-7 (MCM) complex. Interacts with MCM3 and MCM5; bridging the CAF-1 complex to the MCM2-7 (MCM) complex. Recruited to Xist RNA-coated X chromosome. Interacts with EHMT2 and PRDM9; interaction only takes place when PRDM9 is bound to hotspot DNA. Expressed in the hippocampus with reduced expression in epileptic tissue compared to normal adjacent tissue (at protein level). Ubiquitous. Expressed at moderate levels in all tissues examined. Isoform 2: Most abundantly expressed isoform.

The protein localises to the nucleus. It localises to the chromosome. It carries out the reaction 3-hydroxybutanoyl-CoA = (2E)-butenoyl-CoA + H2O. Chromatin reader protein that recognizes and binds histone H3 trimethylated at 'Lys-9', dimethylated at 'Lys-27' and trimethylated at 'Lys-27' (H3K9me3, H3K27me2 and H3K27me3, respectively). Part of multimeric repressive chromatin complexes, where it is required for transmission and restoration of repressive histone marks, thereby preserving the epigenetic landscape. Required for chromatin targeting and maximal enzymatic activity of Polycomb repressive complex 2 (PRC2); acts as a positive regulator of PRC2 activity by bridging the pre-existing histone H3K27me3 and newly recruited PRC2 on neighboring nucleosomes. Acts as a corepressor for REST by facilitating histone-lysine N-methyltransferase EHMT2 recruitment and H3K9 dimethylation at REST target genes for repression. Involved in X chromosome inactivation in females: recruited to Xist RNA-coated X chromosome and facilitates propagation of H3K9me2 by anchoring EHMT2. Promotes EZH2 accumulation and H3K27me3 methylation at DNA double strand breaks (DSBs), thereby facilitating transcriptional repression at sites of DNA damage and homology-directed repair of DSBs. Required for neuronal migration during brain development by repressing expression of RHOA. By repressing the expression of SCN8A, contributes to the inhibition of intrinsic neuronal excitability and epileptogenesis. In addition to acting as a chromatin reader, acts as a hydro-lyase. Shows crotonyl-coA hydratase activity by mediating the conversion of crotonyl-CoA ((2E)-butenoyl-CoA) to beta-hydroxybutyryl-CoA (3-hydroxybutanoyl-CoA), thereby acting as a negative regulator of histone crotonylation. Histone crotonylation is required during spermatogenesis; down-regulation of histone crotonylation by CDYL regulates the reactivation of sex chromosome-linked genes in round spermatids and histone replacement in elongating spermatids. By regulating histone crotonylation and trimethylation of H3K27, may be involved in stress-induced depression-like behaviors, possibly by regulating VGF expression. Functionally, not able to recognize and bind histone H3K9me3, histone H3K27me2 and histone H3K27me3, due to the presence of a N-terminal extension that inactivates the chromo domain. In terms of biological role, not able to recognize and bind histone H3K9me3, histone H3K27me2 and histone H3K27me3, due to the absence of the chromo domain. Acts as a negative regulator of isoform 2 by displacing isoform 2 from chromatin. The protein is Chromodomain Y-like protein of Homo sapiens (Human).